Consider the following 371-residue polypeptide: uncharacterized protein (371 aa).

This is an uncharacterized protein from Rickettsia prowazekii (strain Madrid E).